A 370-amino-acid chain; its full sequence is MRRFFENVPENLWRSYEWQIQNRIKTLKEIKKYLKLLPEEEEGIKRTQGLYPFAITPYYLSLINPEDPKDPIRLQAIPRVVEVDEKVQSAGEPDALKEEGDIPGLTHRYPDRVLLNVTTFCAVYCRHCMRKRIFSQGERARTKEEIDTMIDYIKRHEEIRDVLISGGEPLSLSLEKLEYLLSRLREIKHVEIIRFGTRLPVLAPQRFFNDKLLDILEKYSPIWINTHFNHPNEITEYAEEAVDRLLRRGIPVNNQTVLLKGVNDDPEVMLKLFRKLLRIKVKPQYLFHCDPIKGAVHFRTTIDKGLEIMRYLRGRLSGFGIPTYAVDLPGGKGKVPLLPNYVKKRKGNKFWFESFTGEVVEYEVTEVWEP.

The region spanning 107–322 (HRYPDRVLLN…RGRLSGFGIP (216 aa)) is the Radical SAM core domain. Cys-121, Cys-125, and Cys-128 together coordinate [4Fe-4S] cluster. Residue Lys-334 is modified to N6-(pyridoxal phosphate)lysine.

The protein belongs to the radical SAM superfamily. KamA family. Requires [4Fe-4S] cluster as cofactor. Pyridoxal 5'-phosphate is required as a cofactor.

This is Putative L-lysine 2,3-aminomutase aq_454 from Aquifex aeolicus (strain VF5).